Reading from the N-terminus, the 125-residue chain is NADH dehydrogenase [ubiquinone] 1 beta subcomplex subunit 8, mitochondrial (125 aa).

The N-terminal 29 residues, 1–29, are a transit peptide targeting the mitochondrion; that stretch reads MAGRLSGVASRIMGGNGVVARSVGSSLRQ. A helical membrane pass occupies residues 78–98; sequence ALAWLSGGLGFFVGLGLLAVL.

This sequence belongs to the complex I NDUFB8 subunit family. Complex I is composed of at least 49 different subunits.

The protein resides in the mitochondrion inner membrane. In terms of biological role, accessory subunit of the mitochondrial membrane respiratory chain NADH dehydrogenase (Complex I), that is believed not to be involved in catalysis. Complex I functions in the transfer of electrons from NADH to the respiratory chain. The immediate electron acceptor for the enzyme is believed to be ubiquinone. The chain is NADH dehydrogenase [ubiquinone] 1 beta subcomplex subunit 8, mitochondrial from Arabidopsis thaliana (Mouse-ear cress).